A 168-amino-acid chain; its full sequence is Protein OPG162 (168 aa).

Residues 1–14 (MKSLNRQTVSRFKK) are Intravirion-facing. The chain crosses the membrane as a helical span at residues 15–37 (LSVPAAIMMILSTIISGIGTFLH). Residues 38–168 (YKEELMPSAC…SVLCVKRFYK (131 aa)) lie on the Virion surface side of the membrane. A C-type lectin domain is found at 54 to 163 (YDKHCYLDTN…CKSTQSVLCV (110 aa)). Disulfide bonds link C75/C162 and C141/C154. N133 carries an N-linked (GlcNAc...) asparagine; by host glycan.

Belongs to the orthopoxvirus OPG162 protein family. In terms of assembly, interacts with protein OPG161. Interacts with protein OPG164. Interacts with protein OPG190.

Its subcellular location is the virion membrane. The protein localises to the host Golgi apparatus. In terms of biological role, forms a complex with OPG162 and OPG190 to coordinate the incorporation of OPG164 into wrapped enveloped virion (EV) membranes and, subsequently, the production of actin tails. Therefore plays an essential role in efficient cell-to-cell spread of viral particles. This chain is Protein OPG162 (OPG162), found in Variola virus (isolate Human/India/Ind3/1967) (VARV).